A 128-amino-acid chain; its full sequence is Sulfurtransferase TusD (128 aa).

The active-site Cysteine persulfide intermediate is the C78.

This sequence belongs to the DsrE/TusD family. As to quaternary structure, heterohexamer, formed by a dimer of trimers. The hexameric TusBCD complex contains 2 copies each of TusB, TusC and TusD. The TusBCD complex interacts with TusE.

The protein localises to the cytoplasm. Part of a sulfur-relay system required for 2-thiolation of 5-methylaminomethyl-2-thiouridine (mnm(5)s(2)U) at tRNA wobble positions. Accepts sulfur from TusA and transfers it in turn to TusE. The chain is Sulfurtransferase TusD from Buchnera aphidicola subsp. Acyrthosiphon pisum (strain 5A).